The primary structure comprises 101 residues: uncharacterized protein (101 aa).

Positions 76–101 (KGNVTRRRKKTHLGNDDGKKEAQEKM) are disordered. The segment covering 88-101 (LGNDDGKKEAQEKM) has biased composition (basic and acidic residues).

This is an uncharacterized protein from Homo sapiens (Human).